Here is a 676-residue protein sequence, read N- to C-terminus: UvrABC system protein C (676 aa).

One can recognise a GIY-YIG domain in the interval 16–95 (VEPGVYRFRD…IKEFDPRFNI (80 aa)). The UVR domain occupies 208 to 243 (DRLVRDLERKMTAAAEDLDFERAARLRDDIGALRRA).

It belongs to the UvrC family. Interacts with UvrB in an incision complex.

The protein localises to the cytoplasm. Functionally, the UvrABC repair system catalyzes the recognition and processing of DNA lesions. UvrC both incises the 5' and 3' sides of the lesion. The N-terminal half is responsible for the 3' incision and the C-terminal half is responsible for the 5' incision. This is UvrABC system protein C from Mycobacterium sp. (strain JLS).